A 463-amino-acid chain; its full sequence is Maintenance of mitochondrial morphology protein 1-2 (463 aa).

Over 1-23 the chain is Lumenal; the sequence is MVIPAELIQKALKQQSGWGFTEG. The helical transmembrane segment at 24–44 threads the bilayer; that stretch reads LVLGQLSVIITVIIILKFVIF. Topologically, residues 45 to 463 are cytoplasmic; that stretch reads AENKSPKKGN…TGADTASGSS (419 aa). The tract at residues 72–152 is disordered; that stretch reads GGQTANGVKT…VAGSTSNLAV (81 aa). Positions 108–122 are enriched in polar residues; the sequence is RPGSSRVSMVRSTSG. One can recognise an SMP-LTD domain in the interval 205–435; sequence APESLDWFNV…EPHQMIFILP (231 aa).

Belongs to the MMM1 family. As to quaternary structure, homodimer. Component of the ER-mitochondria encounter structure (ERMES) or MDM complex, composed of MMM1, MDM10, MDM12 and MDM34. An MMM1 homodimer associates with one molecule of MDM12 on each side in a pairwise head-to-tail manner, and the SMP-LTD domains of MMM1 and MDM12 generate a continuous hydrophobic tunnel for phospholipid trafficking.

It localises to the endoplasmic reticulum membrane. Functionally, component of the ERMES/MDM complex, which serves as a molecular tether to connect the endoplasmic reticulum (ER) and mitochondria. Components of this complex are involved in the control of mitochondrial shape and protein biogenesis, and function in nonvesicular lipid trafficking between the ER and mitochondria. The MDM12-MMM1 subcomplex functions in the major beta-barrel assembly pathway that is responsible for biogenesis of all outer membrane beta-barrel proteins, and acts in a late step after the SAM complex. The MDM10-MDM12-MMM1 subcomplex further acts in the TOM40-specific pathway after the action of the MDM12-MMM1 complex. Essential for establishing and maintaining the structure of mitochondria and maintenance of mtDNA nucleoids. The chain is Maintenance of mitochondrial morphology protein 1-2 from Yarrowia lipolytica (strain CLIB 122 / E 150) (Yeast).